A 484-amino-acid polypeptide reads, in one-letter code: Glutamate--tRNA ligase (484 aa).

The 'HIGH' region motif lies at 11 to 21 (PSPTGYLHIGN). A 'KMSKS' region motif is present at residues 252–256 (KLSKR). Position 255 (K255) interacts with ATP.

Belongs to the class-I aminoacyl-tRNA synthetase family. Glutamate--tRNA ligase type 1 subfamily. Monomer.

It is found in the cytoplasm. It catalyses the reaction tRNA(Glu) + L-glutamate + ATP = L-glutamyl-tRNA(Glu) + AMP + diphosphate. Catalyzes the attachment of glutamate to tRNA(Glu) in a two-step reaction: glutamate is first activated by ATP to form Glu-AMP and then transferred to the acceptor end of tRNA(Glu). The chain is Glutamate--tRNA ligase from Staphylococcus aureus (strain MRSA252).